A 460-amino-acid chain; its full sequence is MPKLAYKSVSQISGPLLFVENVPNAAYNEMVDIELENGETRQGQVLDTRKGLAIVQIFGATTGIGTQGTTVKFRGETARLPISEDMLGRVFNGIGEPIDGGPEIIAKERMEITSNAINPYSREEPSEFIETGISAIDGMNTLVRGQKLPIFSGSGLPHNQLAAQIARQAKVLDSSENFAVVFGAMGITSEEANYFTNQFRETGALSRSVMFLNLSSDPSMERIILPRIALTTAEYLAFQKGMHILVILTDMTNYCEALREISAAREEVPGRRGYPGYMYTDLSTIYERAGKLKGNNGSITQIPILTMPGDDITHPVPDLTGYITEGQIVISRDLNRKDMYPGIDVLLSLSRLMNQGIGKGRTREDHRGLADQLYAAYASGKDLRSLTAIVGEEALSQNDRKYLHFADTFESRYIKQGFFEDRSIEDTLGLGWDLLADLPVQDMKRVKPDHIQKYGRWKKE.

This sequence belongs to the ATPase alpha/beta chains family. As to quaternary structure, has multiple subunits with at least A(3), B(3), C, D, E, F, H, I and proteolipid K(x).

It localises to the cell membrane. In terms of biological role, component of the A-type ATP synthase that produces ATP from ADP in the presence of a proton gradient across the membrane. The B chain is a regulatory subunit. In Thermoplasma acidophilum (strain ATCC 25905 / DSM 1728 / JCM 9062 / NBRC 15155 / AMRC-C165), this protein is A-type ATP synthase subunit B.